The following is a 473-amino-acid chain: ATP synthase subunit beta (473 aa).

153 to 160 contributes to the ATP binding site; the sequence is GGAGVGKT.

The protein belongs to the ATPase alpha/beta chains family. As to quaternary structure, F-type ATPases have 2 components, CF(1) - the catalytic core - and CF(0) - the membrane proton channel. CF(1) has five subunits: alpha(3), beta(3), gamma(1), delta(1), epsilon(1). CF(0) has three main subunits: a(1), b(2) and c(9-12). The alpha and beta chains form an alternating ring which encloses part of the gamma chain. CF(1) is attached to CF(0) by a central stalk formed by the gamma and epsilon chains, while a peripheral stalk is formed by the delta and b chains.

It localises to the cell inner membrane. It catalyses the reaction ATP + H2O + 4 H(+)(in) = ADP + phosphate + 5 H(+)(out). Functionally, produces ATP from ADP in the presence of a proton gradient across the membrane. The catalytic sites are hosted primarily by the beta subunits. This is ATP synthase subunit beta from Rickettsia bellii (strain RML369-C).